We begin with the raw amino-acid sequence, 86 residues long: Insulin-related peptide 2 (86 aa).

An N-terminal signal peptide occupies residues 1-19 (MKFYIVFALILACAACVSS). Residues 20 to 43 (QEGTNFYCGRQLSRTLALVCWGAE) constitute a propeptide that is removed on maturation. Arg63 carries the post-translational modification Arginine amide. Residues 67-86 (GPVDECCLKPCSIEEMLTYC) constitute a propeptide that is removed on maturation.

It belongs to the insulin family. In terms of tissue distribution, DAGWWVPPQSARALGGGR-amide: Expressed in corpora cardiaca (CC), corpora allata (CA), antennal lobe (AL) and gnathal ganglion (GNG) (at protein level). Expression in CC and CA detected in most animals, in AL in some animals and in GNG in few animals (at protein level).

It is found in the secreted. This is Insulin-related peptide 2 from Agrotis ipsilon (Black cutworm moth).